Consider the following 165-residue polypeptide: Small ribosomal subunit protein uS17c (165 aa).

A chloroplast-targeting transit peptide spans Met-1–Ala-57. The segment at Ala-128–Val-165 is disordered.

In terms of assembly, component of the chloroplast small ribosomal subunit (SSU). Mature 70S chloroplast ribosomes of higher plants consist of a small (30S) and a large (50S) subunit. The 30S small subunit contains 1 molecule of ribosomal RNA (16S rRNA) and 24 different proteins. The 50S large subunit contains 3 rRNA molecules (23S, 5S and 4.5S rRNA) and 33 different proteins.

The protein localises to the plastid. It is found in the chloroplast. Its function is as follows. Component of the chloroplast ribosome (chloro-ribosome), a dedicated translation machinery responsible for the synthesis of chloroplast genome-encoded proteins, including proteins of the transcription and translation machinery and components of the photosynthetic apparatus. This Spinacia oleracea (Spinach) protein is Small ribosomal subunit protein uS17c (RPS17).